A 241-amino-acid polypeptide reads, in one-letter code: HTH-type quorum-sensing regulator RhlR (241 aa).

The region spanning 174–239 (LMSNPVCLSH…LAAAYAAALG (66 aa)) is the HTH luxR-type domain. The segment at residues 198-217 (SGEIAIILSISESTVNFHHK) is a DNA-binding region (H-T-H motif).

The protein belongs to the autoinducer-regulated transcriptional regulatory protein family. Homodimer in the absence of any acyl-L-homoserine lactone. The presence of the autoinducer C4-HSL has no significant effect on dimerization whereas N-(3-oxododecanoyl)-L-homoserine lactone (3O-C12-HSL), the LasR inducer, is able to dissociate the RhlR homodimers into monomers.

Its subcellular location is the cytoplasm. With respect to regulation, activated by interaction with the autoinducer signal molecule N-butanoyl-L-homoserine lactone (C4-HSL or BHL), the product of the RhlI synthase. Is also activated by binding to rosmarinic acid (RA), a homoserine lactone mimic produced by plants, which induces a broad quorum sensing response, including the induction of all major quorum sensing controlled virulence factors. Rosmarinic acid secretion may be a plant defense mechanism to stimulate a premature quorum sensing response. Quorum-sensing regulator that controls the expression of multiple virulence factors in response to extracellular signaling molecules called autoinducers. Involved, among others, in the transcriptional regulation of genes that are responsible for rhamnolipid surfactant biosynthesis. Acts by binding to a specific sequence in the rhlAB regulatory region, both in the presence and in the absence of its autoinducer. In the former case it activates transcription of the promoter, whereas in the latter it acts as a transcriptional repressor. Also regulates the expression of the rmlBDAC operon, encoding dTDP-L-rhamnose biosynthetic enzymes, by binding to the rml box in the promoter region. In addition, is involved in the regulation of the production of elastase (lasB) and pyocyanine. The polypeptide is HTH-type quorum-sensing regulator RhlR (Pseudomonas aeruginosa (strain ATCC 15692 / DSM 22644 / CIP 104116 / JCM 14847 / LMG 12228 / 1C / PRS 101 / PAO1)).